The primary structure comprises 67 residues: Conotoxin Cp1.1 (67 aa).

Residues 1–26 (MMFRLTSVSCFLLVIACLNLFQVVLT) form the signal peptide. Cystine bridges form between C29/C43, C36/C48, C42/C52, and C47/C56. A Tyrosine amide modification is found at Y60. A propeptide spanning residues 64–67 (ATFQ) is cleaved from the precursor.

Belongs to the conotoxin I2 superfamily. As to expression, expressed by the venom duct.

The protein localises to the secreted. The chain is Conotoxin Cp1.1 from Conus capitaneus (Captain cone).